The following is a 995-amino-acid chain: Epididymis-specific alpha-mannosidase (995 aa).

The signal sequence occupies residues 1-21; sequence MGPHSWLPLFMQLALLGPQWA. Residues histidine 36, aspartate 38, and aspartate 151 each contribute to the Zn(2+) site. The active-site Nucleophile is aspartate 151. A glycan (N-linked (GlcNAc...) asparagine) is linked at asparagine 285. Histidine 411 lines the Zn(2+) pocket. N-linked (GlcNAc...) asparagine glycosylation is found at asparagine 593, asparagine 625, asparagine 657, asparagine 733, asparagine 793, asparagine 875, and asparagine 977. The tract at residues 956–977 is disordered; it reads TEDGHHHRGSSRRPLPPLRGPN.

The protein belongs to the glycosyl hydrolase 38 family. Requires Zn(2+) as cofactor. In terms of processing, processed into a 27 kDa fragment localized on the equatorial segment and the apical rim of the head of mature sperm. Specific to the caput and corpus of the epididymis.

It localises to the secreted. It carries out the reaction Hydrolysis of terminal, non-reducing alpha-D-mannose residues in alpha-D-mannosides.. Can digest both p-nitro-phenyl-alpha-D-mannoside and high mannose oligosaccharide (Man(8)-GlcNAc(2)). May be involved in sperm maturation. Has a possible role in specific sperm-egg interaction since sperm surface mannosidase acts like a receptor for mannose-containing oligosaccharides located on the zona pellucida. The sequence is that of Epididymis-specific alpha-mannosidase (MAN2B2) from Sus scrofa (Pig).